The primary structure comprises 162 residues: Interleukin-15 (162 aa).

The signal sequence occupies residues 1–29 (MRISKPHLRSISIQCYLCLLLNSHFLTEA). Positions 30-48 (GIHVFILGCFSAGLPKTEA) are excised as a propeptide. Cystine bridges form between Cys83/Cys133 and Cys90/Cys136. N-linked (GlcNAc...) asparagine glycosylation is present at Asn127.

Belongs to the IL-15/IL-21 family. Most abundant in placenta and skeletal muscle. It is also detected in the heart, lung, liver and kidney. IL15-S21AA is preferentially expressed in tissues such as testis and thymus.

The protein resides in the secreted. The protein localises to the cytoplasm. It is found in the nucleus. In terms of biological role, cytokine that plays a major role in the development of inflammatory and protective immune responses to microbial invaders and parasites by modulating immune cells of both the innate and adaptive immune systems. Stimulates the proliferation of natural killer cells, T-cells and B-cells and promotes the secretion of several cytokines. In monocytes, induces the production of IL8 and monocyte chemotactic protein 1/CCL2, two chemokines that attract neutrophils and monocytes respectively to sites of infection. Unlike most cytokines, which are secreted in soluble form, IL15 is expressed in association with its high affinity IL15RA on the surface of IL15-producing cells and delivers signals to target cells that express IL2RB and IL2RG receptor subunits. Binding to its receptor triggers the phosphorylation of JAK1 and JAK3 and the recruitment and subsequent phosphorylation of signal transducer and activator of transcription-3/STAT3 and STAT5. In mast cells, induces the rapid tyrosine phosphorylation of STAT6 and thereby controls mast cell survival and release of cytokines such as IL4. The chain is Interleukin-15 (IL15) from Homo sapiens (Human).